We begin with the raw amino-acid sequence, 462 residues long: ESX-1 secretion system protein EccE1 (462 aa).

The next 2 membrane-spanning stretches (helical) occupy residues 9 to 29 and 34 to 54; these read FSTG…IAFL and WWAG…TFYG.

It belongs to the EccE family. In terms of assembly, part of the ESX-1 / type VII secretion system (T7SS), which is composed of cytosolic and membrane components. The ESX-1 membrane complex is composed of EccB1, EccCa1, EccCb1, EccD1 and EccE1.

The protein resides in the cell inner membrane. In terms of biological role, part of the ESX-1 specialized secretion system, which delivers several virulence factors to host cells during infection, including the key virulence factors EsxA (ESAT-6) and EsxB (CFP-10). This Mycobacterium tuberculosis (strain CDC 1551 / Oshkosh) protein is ESX-1 secretion system protein EccE1.